A 163-amino-acid polypeptide reads, in one-letter code: MAKVLLGFMGVGKSSVAPYLNGRFVDMDQVIEDKIGMSITDFFAKEGEASFRQIESETLEELLQEGDDVIISTGGGVVVTECNRKLLKKNRKHNVWLHSSFDVVYNRIKKDIKNQRPLFLNHSKEEFKAIYDGRMALYKGLADLVVTVDNRTPEEVARFIKCM.

10-15 is a binding site for ATP; the sequence is GVGKSS. Serine 14 contributes to the Mg(2+) binding site. Substrate is bound by residues aspartate 28, arginine 52, and glycine 75. Arginine 116 lines the ATP pocket. Arginine 134 lines the substrate pocket. Arginine 151 contacts ATP.

The protein belongs to the shikimate kinase family. As to quaternary structure, monomer. Mg(2+) is required as a cofactor.

Its subcellular location is the cytoplasm. The enzyme catalyses shikimate + ATP = 3-phosphoshikimate + ADP + H(+). The protein operates within metabolic intermediate biosynthesis; chorismate biosynthesis; chorismate from D-erythrose 4-phosphate and phosphoenolpyruvate: step 5/7. Functionally, catalyzes the specific phosphorylation of the 3-hydroxyl group of shikimic acid using ATP as a cosubstrate. This Streptococcus thermophilus (strain ATCC BAA-491 / LMD-9) protein is Shikimate kinase.